Reading from the N-terminus, the 264-residue chain is Hemin import ATP-binding protein HmuV (264 aa).

Residues 2–242 (IEAVNICVQR…QNLSDAYHCS (241 aa)) enclose the ABC transporter domain. Residue 34-41 (GPNGSGKS) coordinates ATP.

The protein belongs to the ABC transporter superfamily. Heme (hemin) importer (TC 3.A.1.14.5) family. As to quaternary structure, the complex is composed of two ATP-binding proteins (HmuV), two transmembrane proteins (HmuU) and a solute-binding protein (HmuT).

Its subcellular location is the cell inner membrane. In terms of biological role, part of the ABC transporter complex HmuTUV involved in hemin import. Responsible for energy coupling to the transport system. The protein is Hemin import ATP-binding protein HmuV of Bartonella quintana (strain Toulouse) (Rochalimaea quintana).